Reading from the N-terminus, the 761-residue chain is Mitochondrial intermediate peptidase 1 (761 aa).

Position 530 (histidine 530) interacts with Zn(2+). Glutamate 531 is an active-site residue. Zn(2+)-binding residues include histidine 534 and histidine 537.

Belongs to the peptidase M3 family. Zn(2+) is required as a cofactor.

It is found in the mitochondrion matrix. It catalyses the reaction Release of an N-terminal octapeptide as second stage of processing of some proteins imported into the mitochondrion.. In terms of biological role, cleaves proteins, imported into the mitochondrion, to their mature size. While most mitochondrial precursor proteins are processed to the mature form in one step by mitochondrial processing peptidase (MPP), the sequential cleavage by MIP of an octapeptide after initial processing by MPP is a required step for a subgroup of nuclear-encoded precursor proteins destined for the matrix or the inner membrane. The protein is Mitochondrial intermediate peptidase 1 (OCT1) of Cryptococcus neoformans var. neoformans serotype D (strain B-3501A) (Filobasidiella neoformans).